A 227-amino-acid polypeptide reads, in one-letter code: 7-cyano-7-deazaguanine synthase (227 aa).

Residue 7–17 coordinates ATP; it reads LSGGLDSSTIL. The Zn(2+) site is built by Cys191, Cys199, Cys202, and Cys205.

The protein belongs to the QueC family. The cofactor is Zn(2+).

The catalysed reaction is 7-carboxy-7-deazaguanine + NH4(+) + ATP = 7-cyano-7-deazaguanine + ADP + phosphate + H2O + H(+). It functions in the pathway purine metabolism; 7-cyano-7-deazaguanine biosynthesis. Its function is as follows. Catalyzes the ATP-dependent conversion of 7-carboxy-7-deazaguanine (CDG) to 7-cyano-7-deazaguanine (preQ(0)). The chain is 7-cyano-7-deazaguanine synthase from Trichormus variabilis (strain ATCC 29413 / PCC 7937) (Anabaena variabilis).